Consider the following 581-residue polypeptide: Arginine--tRNA ligase (581 aa).

Positions 122-132 match the 'HIGH' region motif; sequence PNVAKPMHVGH.

Belongs to the class-I aminoacyl-tRNA synthetase family. In terms of assembly, monomer.

It localises to the cytoplasm. The catalysed reaction is tRNA(Arg) + L-arginine + ATP = L-arginyl-tRNA(Arg) + AMP + diphosphate. The protein is Arginine--tRNA ligase of Francisella tularensis subsp. tularensis (strain WY96-3418).